Here is a 717-residue protein sequence, read N- to C-terminus: Asp/Glu-specific dipeptidyl-peptidase (717 aa).

A signal peptide spans 1 to 21; sequence MNKRFFPTLLLAFVCSTLAYA. Catalysis depends on charge relay system residues His85, Asp226, and Ser652.

The protein belongs to the peptidase S46 family.

The protein resides in the secreted. It localises to the cell surface. Enzyme activity is completely blocked by diisopropyl-fluorophosphates, moderately by phenylmethylsulfonyl fluoride (PMSF) and 4-(2-methyl)benzenesulfonyl fluoride, and slightly by pepstatin in vitro. Its function is as follows. Catalyzes the removal of dipeptides from the N-terminus of oligopeptides. Shows a strict specificity for acidic residues (Asp or Glu) in the P1 position, and has a hydrophobic residue preference at the P2 position. Is likely involved in amino acid metabolism and bacterial growth/survival of asaccharolytic P.endodontalis, that utilizes amino acids from extracellular proteinaceous nutrients as energy and carbon sources. The protein is Asp/Glu-specific dipeptidyl-peptidase (dpp11) of Porphyromonas endodontalis (strain ATCC 35406 / DSM 24491 / JCM 8526 / CCUG 16442 / BCRC 14492 / NCTC 13058 / HG 370) (Bacteroides endodontalis).